Consider the following 371-residue polypeptide: 3-dehydroquinate synthase (371 aa).

NAD(+) contacts are provided by residues 114–118 (GVVGD), 138–139 (TT), lysine 151, lysine 160, and 178–181 (TLNT). Positions 193, 258, and 275 each coordinate Zn(2+).

The protein belongs to the sugar phosphate cyclases superfamily. Dehydroquinate synthase family. Requires Co(2+) as cofactor. Zn(2+) serves as cofactor. It depends on NAD(+) as a cofactor.

It localises to the cytoplasm. It carries out the reaction 7-phospho-2-dehydro-3-deoxy-D-arabino-heptonate = 3-dehydroquinate + phosphate. Its pathway is metabolic intermediate biosynthesis; chorismate biosynthesis; chorismate from D-erythrose 4-phosphate and phosphoenolpyruvate: step 2/7. Catalyzes the conversion of 3-deoxy-D-arabino-heptulosonate 7-phosphate (DAHP) to dehydroquinate (DHQ). The polypeptide is 3-dehydroquinate synthase (Synechococcus sp. (strain CC9605)).